The sequence spans 512 residues: Sodium/proline symporter (512 aa).

A run of 13 helical transmembrane segments spans residues 16 to 36 (WQTYIMIAVYFLILIVIGFYG), 54 to 74 (IGPYITALSAGASDMSGWMIM), 85 to 105 (LSAMWITIGLTLGAYINYFVV), 139 to 159 (IISGLIIVVFFTLYTHSGFVS), 174 to 194 (FGLILVAFIVIFYTFFGGYLA), 200 to 220 (FFQGVIMLIAMVMVPIVAMMN), 240 to 260 (LFKGLSFIGIISLFSWGLGYF), 286 to 306 (ISWMAVGLLGAVAVGLTGIAF), 327 to 347 (VLFHPLVGGFLLAAILAAIMS), 381 to 401 (FVMIGRLSVLVVAIVAIAIAW), 410 to 430 (LVGNAWAGFGASFSPLVLFAL), 438 to 458 (AGAVSGMVSGALVVIVWIAWI), and 467 to 487 (IFGLYEIIPGFIVSVIVTYVV).

Belongs to the sodium:solute symporter (SSF) (TC 2.A.21) family.

The protein localises to the cell membrane. It carries out the reaction L-proline(in) + Na(+)(in) = L-proline(out) + Na(+)(out). Functionally, catalyzes the sodium-dependent uptake of extracellular L-proline. Since most S.aureus strains are L-proline auxotrophs, this transporter may aid the bacterial persistence during an infection of tissues with low proline concentrations. This is Sodium/proline symporter (putP) from Staphylococcus aureus (strain Mu3 / ATCC 700698).